Consider the following 174-residue polypeptide: Transmembrane protein 208 (174 aa).

3 consecutive transmembrane segments (helical) span residues 30–50 (NMAI…FEVT), 54–74 (VFMH…MAFM), and 111–131 (GTLL…LAPI). The disordered stretch occupies residues 151 to 174 (AQDDNPQVDEKKQKKMDRRMRRMR). The span at 163–174 (QKKMDRRMRRMR) shows a compositional bias: basic residues.

The protein belongs to the TMEM208 family. In terms of assembly, interacts with fz. In terms of tissue distribution, expressed in the brain.

Its subcellular location is the endoplasmic reticulum membrane. In terms of biological role, may play an important role during development and helps to maintain proper levels of Fz. This Drosophila melanogaster (Fruit fly) protein is Transmembrane protein 208.